A 470-amino-acid chain; its full sequence is Glycine--tRNA ligase (470 aa).

Positions 94 and 183 each coordinate substrate. Residues Arg-215–Glu-217, Phe-225–Phe-230, Glu-298–Ile-299, and Gly-342–Arg-345 contribute to the ATP site. Phe-230 to Glu-234 contributes to the substrate binding site. Residue Glu-338 to Gly-342 participates in substrate binding.

It belongs to the class-II aminoacyl-tRNA synthetase family. Homodimer.

Its subcellular location is the cytoplasm. The enzyme catalyses tRNA(Gly) + glycine + ATP = glycyl-tRNA(Gly) + AMP + diphosphate. In terms of biological role, catalyzes the attachment of glycine to tRNA(Gly). This Chlorobaculum tepidum (strain ATCC 49652 / DSM 12025 / NBRC 103806 / TLS) (Chlorobium tepidum) protein is Glycine--tRNA ligase.